Reading from the N-terminus, the 133-residue chain is Small ribosomal subunit protein uS8 (133 aa).

The protein belongs to the universal ribosomal protein uS8 family. As to quaternary structure, part of the 30S ribosomal subunit.

Its function is as follows. One of the primary rRNA binding proteins, it binds directly to 16S rRNA central domain where it helps coordinate assembly of the platform of the 30S subunit. This chain is Small ribosomal subunit protein uS8, found in Staphylothermus marinus (strain ATCC 43588 / DSM 3639 / JCM 9404 / F1).